Consider the following 273-residue polypeptide: Cell division protein ZipA (273 aa).

M1 is a topological domain (periplasmic). The helical transmembrane segment at 2 to 22 (EFGLREWLIVIGIIVIAGILF) threads the bilayer. The Cytoplasmic segment spans residues 23-273 (DGWRRMRGGK…FERRQLTQKR (251 aa)). The interval 65-125 (EMEPQLDEDD…QEPKKSAKLS (61 aa)) is disordered. Basic and acidic residues predominate over residues 111–120 (VDDKPQEPKK).

Belongs to the ZipA family. In terms of assembly, interacts with FtsZ via their C-terminal domains.

The protein resides in the cell inner membrane. Its function is as follows. Essential cell division protein that stabilizes the FtsZ protofilaments by cross-linking them and that serves as a cytoplasmic membrane anchor for the Z ring. Also required for the recruitment to the septal ring of downstream cell division proteins. The chain is Cell division protein ZipA from Ectopseudomonas mendocina (strain ymp) (Pseudomonas mendocina).